The following is a 258-amino-acid chain: MSSLLSKTRRLNKILQKTGTEPVAFQDICTLLSEVLECNAYIVSKRGKVLGYTFSPGFECEAMKKKVIEDKKFPEDYNLTLLESNETLANLSNQGRCVFAEIGDCKTKDKISTIIPIIGSRERLGTLILARFGKEFTDDDLVLVEYSATIVGMEMLRALQEDLADQTRKKAVVQLAIGTLSYSELEAVEHIFEELNGNEGLLVASKIADKVGITRSVIVNALRKFESAGVIESRSLGMKGTYIRVLNEKLLDELKKIK.

Positions 1-156 (MSSLLSKTRR…SATIVGMEML (156 aa)) are GAF domain. A DNA-binding region (H-T-H motif) is located at residues 204-223 (ASKIADKVGITRSVIVNALR).

This sequence belongs to the CodY family.

Its subcellular location is the cytoplasm. In terms of biological role, DNA-binding global transcriptional regulator which is involved in the adaptive response to starvation and acts by directly or indirectly controlling the expression of numerous genes in response to nutrient availability. During rapid exponential growth, CodY is highly active and represses genes whose products allow adaptation to nutrient depletion. This chain is Global transcriptional regulator CodY, found in Clostridium botulinum (strain Alaska E43 / Type E3).